Here is a 236-residue protein sequence, read N- to C-terminus: Purine nucleoside phosphorylase CA_C1699 (236 aa).

Positions 62, 97, and 114 each coordinate Zn(2+).

Belongs to the purine nucleoside phosphorylase YfiH/LACC1 family. Homodimer. It depends on Cu(2+) as a cofactor. Zn(2+) serves as cofactor.

It catalyses the reaction adenosine + phosphate = alpha-D-ribose 1-phosphate + adenine. The enzyme catalyses S-methyl-5'-thioadenosine + phosphate = 5-(methylsulfanyl)-alpha-D-ribose 1-phosphate + adenine. The catalysed reaction is inosine + phosphate = alpha-D-ribose 1-phosphate + hypoxanthine. It carries out the reaction adenosine + H2O + H(+) = inosine + NH4(+). Purine nucleoside enzyme that catalyzes the phosphorolysis of adenosine and inosine nucleosides, yielding D-ribose 1-phosphate and the respective free bases, adenine and hypoxanthine. Also catalyzes the phosphorolysis of S-methyl-5'-thioadenosine into adenine and S-methyl-5-thio-alpha-D-ribose 1-phosphate. Also has adenosine deaminase activity. The protein is Purine nucleoside phosphorylase CA_C1699 of Clostridium acetobutylicum (strain ATCC 824 / DSM 792 / JCM 1419 / IAM 19013 / LMG 5710 / NBRC 13948 / NRRL B-527 / VKM B-1787 / 2291 / W).